The sequence spans 637 residues: MSRKASEDVEYTLRSLSSLMGERRRRQPEPGAPGGERSLLAAESAASLQGAELERAARRQFQRDETPAFVYAAAAFSALGGFLFGYDTGVVSGAMLLLRRQMRLGAMWQELLVSGAVGAAAVAALAGGALNGALGRRSAILLASALCTVGSAVLAAAANKETLLAGRLVVGLGIGIASMTVPVYIAEVSPPNLRGRLVTINTLFITGGQFFASVVDGAFSYLQKDGWRYMLGLAAIPAVIQFLGFLFLPESPRWLIQKGQTQKARRILSQMRGNQTIDEEYDSIRNSIEEEEKEASAAGPIICRMLSYPPTRRALAVGCGLQMFQQLSGINTIMYYSATILQMSGVEDDRLAIWLASITAFTNFIFTLVGVWLVEKVGRRKLTFGSLAGTTVALTILALGFLLSAQVSPRVTFRPTAPSGQNATCTEYSYCNECMLDPDCGFCYKINSSAVIDSSCVPVNKASTNEAAWGRCENETKFKAEDVHWAYSFCPTPYSWTALVGLVLYLVFFAPGMGPMPWTVNSEIYPLWARSTGNACSAGINWIFNVLVSLTFLHTAEYLTYYGAFFLYAGFAAVGLLFVYGCLPETKGKKLEEIESLFDHRLCTCGTADSDEGRYIEYIRVKGSNYHLSDNDASDVE.

At 1–65 the chain is on the cytoplasmic side; it reads MSRKASEDVE…AARRQFQRDE (65 aa). Ser-6 is subject to Phosphoserine. A disordered region spans residues 16–38; sequence LSSLMGERRRRQPEPGAPGGERS. 2 positions are modified to phosphoserine: Ser-44 and Ser-47. Residues 66–86 form a helical membrane-spanning segment; sequence TPAFVYAAAAFSALGGFLFGY. The Extracellular segment spans residues 87–114; it reads DTGVVSGAMLLLRRQMRLGAMWQELLVS. A helical membrane pass occupies residues 115–135; that stretch reads GAVGAAAVAALAGGALNGALG. Residues 136 to 137 lie on the Cytoplasmic side of the membrane; the sequence is RR. Residues 138–158 traverse the membrane as a helical segment; the sequence is SAILLASALCTVGSAVLAAAA. At 159-167 the chain is on the extracellular side; it reads NKETLLAGR. The chain crosses the membrane as a helical span at residues 168 to 188; sequence LVVGLGIGIASMTVPVYIAEV. Topologically, residues 189 to 201 are cytoplasmic; sequence SPPNLRGRLVTIN. Residues 202–222 traverse the membrane as a helical segment; that stretch reads TLFITGGQFFASVVDGAFSYL. Residues 223–228 are Extracellular-facing; that stretch reads QKDGWR. A helical membrane pass occupies residues 229-249; that stretch reads YMLGLAAIPAVIQFLGFLFLP. The Cytoplasmic segment spans residues 250–313; it reads ESPRWLIQKG…RMLSYPPTRR (64 aa). Residues 314–334 traverse the membrane as a helical segment; it reads ALAVGCGLQMFQQLSGINTIM. Over 335 to 352 the chain is Extracellular; that stretch reads YYSATILQMSGVEDDRLA. The helical transmembrane segment at 353-373 threads the bilayer; the sequence is IWLASITAFTNFIFTLVGVWL. Residues 374-382 are Cytoplasmic-facing; that stretch reads VEKVGRRKL. Residues 383–403 traverse the membrane as a helical segment; it reads TFGSLAGTTVALTILALGFLL. Topologically, residues 404–497 are extracellular; it reads SAQVSPRVTF…SFCPTPYSWT (94 aa). N-linked (GlcNAc...) asparagine glycosylation is found at Asn-422, Asn-447, and Asn-474. Residues 498–518 form a helical membrane-spanning segment; sequence ALVGLVLYLVFFAPGMGPMPW. Over 519-538 the chain is Cytoplasmic; sequence TVNSEIYPLWARSTGNACSA. The helical transmembrane segment at 539–559 threads the bilayer; it reads GINWIFNVLVSLTFLHTAEYL. Over 560–562 the chain is Extracellular; sequence TYY. A helical membrane pass occupies residues 563–583; that stretch reads GAFFLYAGFAAVGLLFVYGCL. Residues 584 to 637 lie on the Cytoplasmic side of the membrane; that stretch reads PETKGKKLEEIESLFDHRLCTCGTADSDEGRYIEYIRVKGSNYHLSDNDASDVE. Residues Ser-629 and Ser-634 each carry the phosphoserine modification.

It belongs to the major facilitator superfamily. Sugar transporter (TC 2.A.1.1) family.

It is found in the cell membrane. It carries out the reaction myo-inositol(out) + H(+)(out) = myo-inositol(in) + H(+)(in). H(+)-myo-inositol cotransporter. Can also transport related stereoisomers. This Rattus norvegicus (Rat) protein is Proton myo-inositol cotransporter.